Consider the following 580-residue polypeptide: Phosphatase and actin regulator 1 (580 aa).

Residues S67 and S78 each carry the phosphoserine modification. Position 104 is a phosphothreonine (T104). Residues 108 to 129 (RRRSKFANLGRIFKPWKWRKKK) carry the Nuclear localization signal motif. The stretch at 138 to 163 (AALERKISMRQSREELIKRGVLKEIY) is one RPEL 1 repeat. Disordered stretches follow at residues 330-350 (SEQR…SSDG) and 374-408 (DNKE…DDAS). Residues 337–348 (STSYHSSGLHSS) show a composition bias toward low complexity. The segment covering 374-383 (DNKENVPHEP) has biased composition (basic and acidic residues). The span at 395–407 (EEEEEEEDEDDDA) shows a compositional bias: acidic residues. RPEL repeat units follow at residues 422–447 (DSLA…PRQT), 460–485 (TKLT…KPRN), and 498–523 (RRLT…IRFS). Positions 463-494 (TRRLSQRPTAEELEQRNILKPRNEQEEQEEKR) are disordered. Residue S467 is modified to Phosphoserine. Residues 471 to 494 (TAEELEQRNILKPRNEQEEQEEKR) show a composition bias toward basic and acidic residues. Residue S505 is modified to Phosphoserine.

This sequence belongs to the phosphatase and actin regulator family. In terms of assembly, interacts (via RPEL repeats) with ACTA1 and PPP1CA; ACTA1 and PPP1CA compete for the same binding site.

It is found in the cytoplasm. It localises to the synapse. Its subcellular location is the nucleus. Functionally, binds actin monomers (G actin) and plays a role in multiple processes including the regulation of actin cytoskeleton dynamics, actin stress fibers formation, cell motility and survival, formation of tubules by endothelial cells, and regulation of PPP1CA activity. Involved in the regulation of cortical neuron migration and dendrite arborization. The polypeptide is Phosphatase and actin regulator 1 (Phactr1) (Mus musculus (Mouse)).